Reading from the N-terminus, the 728-residue chain is Lutropin-choriogonadotropic hormone receptor (728 aa).

The first 19 residues, 1 to 19 (MLPALLPLLLPALLPGAGG), serve as a signal peptide directing secretion. Over 20-389 (GRCPQRCACT…DILGYSFLRV (370 aa)) the chain is Extracellular. LRR repeat units lie at residues 92–116 (LPAL…AFRN), 117–142 (LPRL…IFSS), 144–166 (AHFI…AFQG), 168–191 (SNES…AFNG), 193–215 (KLNQ…ALRG), and 216–239 (ATGP…GLEA). A helical transmembrane segment spans residues 390–410 (LIWFINILALAGNFIVLLVLI). The Cytoplasmic segment spans residues 411-420 (TSHYKLTVPR). Residues 421-441 (FLMCNLSFADFCMGLYLLLIA) form a helical membrane-spanning segment. At 442–466 (SVDAQTSGQYYNHAIDWQTGSGCST) the chain is on the extracellular side. C464 and C539 form a disulfide bridge. Residues 467–487 (AGFFTVFASELSVYTLTVITI) traverse the membrane as a helical segment. The Cytoplasmic segment spans residues 488-507 (ERWHTITYAMQLDRKLRLRH). A helical membrane pass occupies residues 508 to 528 (AVPIMLGGWVFSILIAVLPLL). The Extracellular portion of the chain corresponds to 529 to 551 (GVSSYMKVSICLPMDIETGLSQA). The chain crosses the membrane as a helical span at residues 552–572 (YILLILMLNVIAFLVICACYI). Residues 573-595 (KIYVAVQNPELVAANKDTKIAKR) lie on the Cytoplasmic side of the membrane. A helical transmembrane segment spans residues 596–616 (MAILIFTDFTCMAPISFFAIS). The Extracellular segment spans residues 617-630 (AAIKVPLITVTNSK). The helical transmembrane segment at 631–651 (ILLVLFYPVNSCANPFLYAIF) threads the bilayer. Over 652–728 (TKAFQRDFFL…STKKSQPECQ (77 aa)) the chain is Cytoplasmic.

The protein belongs to the G-protein coupled receptor 1 family. FSH/LSH/TSH subfamily. In terms of tissue distribution, expressed in ovarian follicle granulosa cells. Expressed in ovarian follicle theca cells.

Its subcellular location is the cell membrane. In terms of biological role, receptor for lutropin-choriogonadotropic hormone. The activity of this receptor is mediated by G proteins which activate adenylate cyclase. This Gallus gallus (Chicken) protein is Lutropin-choriogonadotropic hormone receptor.